We begin with the raw amino-acid sequence, 154 residues long: Protein X (154 aa).

Residues 68–117 (PCALRFTSARCMETTVNAHQILPKVLHKRTLGLPAMSTTDLEAYFKDCVF) form a mitochondrial targeting sequence region.

It belongs to the orthohepadnavirus protein X family. As to quaternary structure, may form homodimer. May interact with host CEBPA, CFLAR, CREB1, DDB1, E4F1, HBXIP, HSPD1/HSP60, NFKBIA, POLR2E and SMAD4. Interacts with host SMC5-SMC6 complex and induces its degradation. Interacts with host TRPC4AP; leading to prevent ubiquitination of TRPC4AP. Interacts with host PLSCR1; this interaction promotes ubiquitination and degradation of HBx and impairs HBx-mediated cell proliferation. Post-translationally, a fraction may be phosphorylated in insect cells and HepG2 cells, a human hepatoblastoma cell line. Phosphorylated in vitro by host protein kinase C or mitogen-activated protein kinase. N-acetylated in insect cells.

The protein resides in the host cytoplasm. Its subcellular location is the host nucleus. It localises to the host mitochondrion. In terms of biological role, multifunctional protein that plays a role in silencing host antiviral defenses and promoting viral transcription. Does not seem to be essential for HBV infection. May be directly involved in development of cirrhosis and liver cancer (hepatocellular carcinoma). Most of cytosolic activities involve modulation of cytosolic calcium. The effect on apoptosis is controversial depending on the cell types in which the studies have been conducted. May induce apoptosis by localizing in mitochondria and causing loss of mitochondrial membrane potential. May also modulate apoptosis by binding host CFLAR, a key regulator of the death-inducing signaling complex (DISC). Promotes viral transcription by using the host E3 ubiquitin ligase DDB1 to target the SMC5-SMC6 complex to proteasomal degradation. This host complex would otherwise bind to viral episomal DNA, and prevents its transcription. Moderately stimulates transcription of many different viral and cellular transcription elements. Promoters and enhancers stimulated by HBx contain DNA binding sites for NF-kappa-B, AP-1, AP-2, c-EBP, ATF/CREB, or the calcium-activated factor NF-AT. This Homo sapiens (Human) protein is Protein X.